The primary structure comprises 88 residues: Large ribosomal subunit protein bL27 (88 aa).

The tract at residues 1-21 is disordered; the sequence is MAHKKGQGSTQNNRDSAGRRL.

It belongs to the bacterial ribosomal protein bL27 family.

The sequence is that of Large ribosomal subunit protein bL27 from Helicobacter acinonychis (strain Sheeba).